The following is a 980-amino-acid chain: SLIT and NTRK-like protein 3 (980 aa).

Residues 1 to 27 (MMKPSIAEMLHRGRMLWIILLSTIALG) form the signal peptide. At 30 to 655 (TPIPLIEDSE…SPPGGPVPLS (626 aa)) the chain is on the extracellular side. Residue Asn-69 is glycosylated (N-linked (GlcNAc...) asparagine). 6 LRR repeats span residues 79–100 (RPFK…SFLH), 103–124 (NAVS…AFNG), 127–148 (ILKR…TFLG), 151–172 (SLEY…AFRN), 175–196 (KLRV…LFKA), and 198–219 (SLTH…GMLD). The LRRCT 1 domain occupies 233 to 284 (NPWNCTCEIVQLKSWLERIPYTALVGDITCETPFHFHGKDLREIKKTELCPL). The interval 326-361 (EYKSSNKQPKPTKQPRTPRPPSTSQALYPGPNQPPI) is disordered. An LRRNT domain is found at 365–407 (QTRPPIPIICPTGCTCNLHINDLGLTVNCKERGFNNISELLPR). 6 LRR repeats span residues 410-431 (NAKK…DFWN), 434-455 (SLDL…AFIN), 458-479 (NLKS…MFRG), 482-503 (SLHY…AFSL), 506-527 (NLKL…AFAG), and 529-550 (SLAR…GVLE). Residues 563–614 (NPWDCTCDLVPFKQWIETISSVSVVGDVLCRTPENLTHRDVRTIELEVLCPE) form the LRRCT 2 domain. Residue Asn-597 is glycosylated (N-linked (GlcNAc...) asparagine). The tract at residues 622-644 (GPSPPQPGDYHPNGGPTSASPYE) is disordered. The helical transmembrane segment at 656 to 676 (VLILSLLVLFFSAVFVAAGLF) threads the bilayer. At 677–980 (AYVLRRRRKK…EVLEKTAYRF (304 aa)) the chain is on the cytoplasmic side. Disordered stretches follow at residues 709-735 (LFED…EKAP) and 762-785 (EEEV…GTQP). Over residues 715–725 (GNSGGSGGGGR) the composition is skewed to gly residues.

The protein belongs to the SLITRK family. As to expression, broadly expressed in embryonic brain with highest expression in cortical plate, pyramidal cell layer of the hippocampus, thalamus and hypothalamus.

It is found in the membrane. Functionally, suppresses neurite outgrowth. The protein is SLIT and NTRK-like protein 3 (Slitrk3) of Mus musculus (Mouse).